Here is a 447-residue protein sequence, read N- to C-terminus: Hemogen (447 aa).

Residues 1-91 (MDLGKDQSLS…EMKVELPSQL (91 aa)) form a disordered region. The interval 7 to 86 (QSLSKLHQTP…RQQNTEMKVE (80 aa)) is necessary for nuclear localization. Composition is skewed to basic and acidic residues over residues 14 to 25 (QTPDHHQEESHV) and 35 to 49 (RNRE…EAQE). The span at 59–78 (EKKHKRQRTGKRSERGRKRQ) shows a compositional bias: basic residues. Residues serine 89 and serine 122 each carry the phosphoserine modification. Residues 137 to 156 (QESVTLQENSSEYQATAVQN) form a disordered region. Residue serine 200 is modified to Phosphoserine. 2 disordered regions span residues 210–280 (AKVL…MAVP) and 306–337 (AMSK…PGSE). Threonine 217 bears the Phosphothreonine mark. Residues 306–316 (AMSKDPSHKTT) show a composition bias toward basic and acidic residues.

Its subcellular location is the nucleus. Its function is as follows. Regulates the proliferation and differentiation of hematopoietic cells. Overexpression block the TPA-induced megakaryocytic differentiation in the K562 cell model. May also prevent cell apoptosis through the activation of the nuclear factor-kappa B (NF-kB). In Bos taurus (Bovine), this protein is Hemogen (HEMGN).